Reading from the N-terminus, the 636-residue chain is Chaperone protein HtpG (636 aa).

The a; substrate-binding stretch occupies residues 1–344 (MTLEADKQTH…SADLSLNVSR (344 aa)). The tract at residues 345–561 (EILQSGPVVD…EGDLGLQMRQ (217 aa)) is b. The tract at residues 562 to 636 (LLEASGQKVP…LNKLLLELSA (75 aa)) is c.

The protein belongs to the heat shock protein 90 family. Homodimer.

It is found in the cytoplasm. Its function is as follows. Molecular chaperone. Has ATPase activity. This is Chaperone protein HtpG from Xylella fastidiosa (strain Temecula1 / ATCC 700964).